We begin with the raw amino-acid sequence, 313 residues long: Ester hydrolase C11orf54 homolog (313 aa).

Residues H264, H266, and H276 each coordinate Zn(2+).

In terms of assembly, monomer. Requires Zn(2+) as cofactor.

It localises to the nucleus. Its subcellular location is the cytoplasm. Functionally, exhibits ester hydrolase activity on the substrate p-nitrophenyl acetate, in vitro. May regulate DNA damage and repair by regulating HIF1A degradation via chaperone-mediated autophagy (CMA). The protein is Ester hydrolase C11orf54 homolog of Xenopus tropicalis (Western clawed frog).